The following is a 184-amino-acid chain: Signal peptidase I S (184 aa).

At Met1 to Ala18 the chain is on the cytoplasmic side. Residues Ile19–Val39 form a helical membrane-spanning segment. At Asp40–Asn184 the chain is on the extracellular side. Residues Ser43 and Lys83 contribute to the active site.

The protein belongs to the peptidase S26 family.

It localises to the cell membrane. It catalyses the reaction Cleavage of hydrophobic, N-terminal signal or leader sequences from secreted and periplasmic proteins.. Its function is as follows. Not essential for cell viability, but required for efficient secretion of many proteins. This chain is Signal peptidase I S (sipS), found in Bacillus subtilis (strain 168).